Reading from the N-terminus, the 492-residue chain is 2-succinylbenzoate--CoA ligase (492 aa).

Belongs to the ATP-dependent AMP-binding enzyme family. MenE subfamily.

The catalysed reaction is 2-succinylbenzoate + ATP + CoA = 2-succinylbenzoyl-CoA + AMP + diphosphate. The protein operates within quinol/quinone metabolism; 1,4-dihydroxy-2-naphthoate biosynthesis; 1,4-dihydroxy-2-naphthoate from chorismate: step 5/7. It participates in quinol/quinone metabolism; menaquinone biosynthesis. Converts 2-succinylbenzoate (OSB) to 2-succinylbenzoyl-CoA (OSB-CoA). The chain is 2-succinylbenzoate--CoA ligase from Staphylococcus aureus (strain bovine RF122 / ET3-1).